A 64-amino-acid polypeptide reads, in one-letter code: Conotoxin LiC121 (64 aa).

Residues 1–22 (MRCVPVFIILLLLSPSAPSVDA) form the signal peptide. Positions 23 to 48 (HPKTKDDVPLASFHDDAKRTLQRLWI) are excised as a propeptide.

This sequence belongs to the conotoxin T superfamily. In terms of processing, contains 2 disulfide bonds that can be either 'C1-C3, C2-C4' or 'C1-C4, C2-C3', since these disulfide connectivities have been observed for conotoxins with cysteine framework V (for examples, see AC P0DQQ7 and AC P81755). Expressed by the venom duct.

Its subcellular location is the secreted. The protein is Conotoxin LiC121 of Conus lividus (Livid cone).